A 201-amino-acid polypeptide reads, in one-letter code: Ras-related protein Rab-9B (201 aa).

GTP contacts are provided by Val18, Gly19, Lys20, Ser21, Ser22, Asp33, Ser34, Ala36, His38, and Thr39. Residue Ser21 coordinates Mg(2+). The Switch 1 motif lies at 31–42 (KFDSQAFHTIGV). Ser34 carries the post-translational modification Phosphoserine. The Mg(2+) site is built by Thr39 and Asp62. The Switch 2 motif lies at 64–78 (AGQERFKSLRTPFYR). Residues Gly65, Asn124, Lys125, Ala155, and Lys156 each contribute to the GTP site. 2 S-geranylgeranyl cysteine lipidation sites follow: Cys200 and Cys201.

It belongs to the small GTPase superfamily. Rab family. Interacts (GTP-bound form) with SGSM1; the GDP-bound form has much lower affinity for SGSM1. The GTP-bound form but not the GDP-bound form interacts with HPS4 and the BLOC-3 complex (heterodimer of HPS1 and HPS4) but does not interact with HPS1 alone. Interacts (GTP-bound form) with NDE1. Mg(2+) is required as a cofactor.

It is found in the cell membrane. The protein localises to the cytoplasmic vesicle. It localises to the phagosome membrane. The catalysed reaction is GTP + H2O = GDP + phosphate + H(+). Regulated by guanine nucleotide exchange factors (GEFs) which promote the exchange of bound GDP for free GTP. Regulated by GTPase activating proteins (GAPs) which increase the GTP hydrolysis activity. Inhibited by GDP dissociation inhibitors (GDIs). Its function is as follows. The small GTPases Rab are key regulators of intracellular membrane trafficking, from the formation of transport vesicles to their fusion with membranes. Rabs cycle between an inactive GDP-bound form and an active GTP-bound form that is able to recruit to membranes different sets of downstream effectors directly responsible for vesicle formation, movement, tethering and fusion. RAB9B is involved in the transport of proteins between the endosomes and the trans Golgi network. May use NDE1/NDEL1 as an effector to interact with the dynein motor complex in order to control retrograde trafficking of RAB9-associated late endosomes to the TGN. The protein is Ras-related protein Rab-9B of Mus musculus (Mouse).